A 1839-amino-acid polypeptide reads, in one-letter code: Nuclear pore complex protein DDB_G0274915 (1839 aa).

2 stretches are compositionally biased toward polar residues: residues 1–27 (MNGR…NTIN) and 35–54 (NGSL…QTNK). 10 disordered regions span residues 1–54 (MNGR…QTNK), 78–150 (DESS…ISDD), 325–367 (KQFD…PNAD), 480–568 (PLNK…FSTT), 589–636 (TTIA…GGGV), 657–705 (VSTS…DVPG), 739–810 (TTTT…DSKT), 818–837 (PTTE…SSLF), 846–1106 (TTPS…FSSN), and 1129–1839 (TTAT…AKKK). A compositionally biased stretch (low complexity) spans 80–90 (SSSSSSSSSSS). Over residues 91–101 (YDDGNNIPQKG) the composition is skewed to polar residues. Low complexity-rich tracts occupy residues 102–148 (SSTT…INIS) and 329–343 (DNNN…SIYN). The span at 344–354 (RQSIYSPNSKI) shows a compositional bias: polar residues. Composition is skewed to low complexity over residues 495 to 568 (TYAT…FSTT) and 589 to 607 (TTIA…SSSS). The span at 616-628 (MFTSDSNKSNLFS) shows a compositional bias: polar residues. Composition is skewed to low complexity over residues 658-671 (STST…SKSS) and 739-760 (TTTT…TTDK). Residues 761-773 (SSADKSSADKSST) are compositionally biased toward basic and acidic residues. Composition is skewed to low complexity over residues 774-803 (DKST…TTTT), 827-837 (PTTSLTSSSLF), and 846-871 (TTPS…NTTT). 2 stretches are compositionally biased toward acidic residues: residues 896–923 (ESDE…EAEE) and 944–958 (LEAE…DSDE). Low complexity-rich tracts occupy residues 1005–1021 (GSSL…SFLT) and 1046–1060 (SSSS…IPTT). A compositionally biased stretch (basic and acidic residues) spans 1061 to 1070 (SKKEKIDDKP). Residues 1071 to 1092 (STTTTTTTTSLFGSTTTSGLFS) show a composition bias toward low complexity. Residues 1093–1106 (NPSTTSTGSLFSSN) are compositionally biased toward polar residues. Composition is skewed to low complexity over residues 1129–1242 (TTAT…FGST) and 1250–1292 (ATTT…GLFG). The segment covering 1293–1310 (ASSSTTPSTGLFGSATTP) has biased composition (polar residues). Composition is skewed to low complexity over residues 1311–1384 (STGL…TTPP) and 1397–1498 (LFGT…TTAT). Over residues 1507–1521 (TAPSTGLFGSTTATN) the composition is skewed to polar residues. Residues 1522–1673 (PSTGLFGSTT…SSTPFGASPF (152 aa)) show a composition bias toward low complexity. Positions 1676–1708 (PTSTSSPPFGAPTSASSTPFGAPQISTSSSTNL) are enriched in polar residues. The segment covering 1712–1810 (ASSSTAAPSF…PFGSTPSTAP (99 aa)) has biased composition (low complexity).

In Dictyostelium discoideum (Social amoeba), this protein is Nuclear pore complex protein DDB_G0274915.